The sequence spans 389 residues: MEKTSMFSIHEGKPIRCKAAVSRKPGEALVIEEIHVDPPQAYEVRIKIICTSLCHTDVSFSKIDSGPLARFPRILGHEAVGVIESIGEHVNGFQQGDVVLPVFHPHCEECRDCKSSKSNWCARFADDFLSNTRRYGMTSRFKDSFGEDIYHFLFVSSFSEYTVVDIAHLVKISPDIPVDKAALLSCGVSTGIGAAWKVANVEKGSTVAVFGLGAVGLAVGEGARLRGAGKIIGVDLNPEKFELGKKFGFTDFINSTLCGENKISEVIKEMTGGGVDYSFECVGLPSLLTEAFSSTRTGSGKTVVLGIDKHLTPVSLGSFDLLRGRHVCGSLFGGLKPKLDIPILVDHYLKKELNLDSFITHELKFEEINKAFDLLVQGKSLRCILWMNK.

Zn(2+)-binding residues include Cys-54, Thr-56, His-77, Cys-107, Cys-110, Cys-113, Cys-121, and Cys-186. An alcohol contacts are provided by Thr-56 and His-77. Thr-56 is a binding site for NAD(+). NAD(+)-binding positions include 211–216 (GLGAVG), Asp-235, Lys-240, 305–307 (LGI), Phe-332, and Arg-382.

The protein belongs to the zinc-containing alcohol dehydrogenase family. Class-III subfamily. In terms of assembly, homodimer. Zn(2+) is required as a cofactor.

The protein localises to the cytoplasm. It carries out the reaction a primary alcohol + NAD(+) = an aldehyde + NADH + H(+). The enzyme catalyses a secondary alcohol + NAD(+) = a ketone + NADH + H(+). This is Alcohol dehydrogenase-like 5 from Arabidopsis thaliana (Mouse-ear cress).